Reading from the N-terminus, the 370-residue chain is MASGSSSDAAEPAGPAGRAASAPEAAQAEEDRVKRRRLQCLGFALVGGCDPTMVPSVLRENDWQTQKALSAYFELPENDQGWPRQPPTSFKSEAYVDLTNEDANDTTILEASPSGTPLEDSSTISFITWNIDGLDGCNLPERARGVCSCLALYSPDVVFLQEVIPPYCAYLKKRAASYTIITGNEEGYFTAILLKKGRVKFKSQEIIPFPNTKMMRNLLCVNVSLGGNEFCLMTSHLESTREHSAERIRQLKTVLGKMQEAPDSTTVIFAGDTNLRDQEVIKCGGLPDNVFDAWEFLGKPKHCQYTWDTKANNNLRIPAAYKHRFDRIFFRAEEGHLIPQSLDLVGLEKLDCGRFPSDHWGLLCTLNVVL.

At Met-1 the chain carries N-acetylmethionine. The segment at 1-32 is disordered; it reads MASGSSSDAAEPAGPAGRAASAPEAAQAEEDR. Positions 9 to 26 are enriched in low complexity; sequence AAEPAGPAGRAASAPEAA. Lys-34 is covalently cross-linked (Glycyl lysine isopeptide (Lys-Gly) (interchain with G-Cter in SUMO2)). Position 99 is a phosphothreonine; by ACVR1B (Thr-99). Residues 130 to 134 form an interaction with 5' end of substrate DNA region; sequence NIDGL. Mg(2+) is bound by residues Asp-132 and Glu-162. Residues 236–241 are interaction with 5' end of substrate DNA; that stretch reads HLESTR. The Proton donor/acceptor role is filled by Asp-272. Interaction with 5' end of substrate DNA stretches follow at residues 274–276 and 315–321; these read NLR and LRIPAAY.

Belongs to the CCR4/nocturin family. In terms of assembly, interacts with TRAF2, TRAF3, TRAF5, TRAF6, TNFRSF8/CD30, TNFRSF5/CD40, TNFRSF1B/TNF-R75, ETS1, ETS2, FLI1, SMAD3 and ACVR1B/ALK4. The cofactor is Mg(2+). Requires Mn(2+) as cofactor. Post-translationally, ubiquitinated by TRAF6. Widely expressed. Expressed in whole brain, cerebellum, quiescent cortical astrocytes and cerebellar granule neurons.

The protein localises to the nucleus. It is found in the PML body. It localises to the nucleolus. Its subcellular location is the cytoplasm. In terms of biological role, DNA repair enzyme that can remove a variety of covalent adducts from DNA through hydrolysis of a 5'-phosphodiester bond, giving rise to DNA with a free 5' phosphate. Catalyzes the hydrolysis of dead-end complexes between DNA and the topoisomerase 2 (TOP2) active site tyrosine residue. The 5'-tyrosyl DNA phosphodiesterase activity can enable the repair of TOP2-induced DNA double-strand breaks/DSBs without the need for nuclease activity, creating a 'clean' DSB with 5'-phosphate termini that are ready for ligation. Thereby, protects the transcription of many genes involved in neurological development and maintenance from the abortive activity of TOP2. Hydrolyzes 5'-phosphoglycolates on protruding 5' ends on DSBs due to DNA damage by radiation and free radicals. Has preference for single-stranded DNA or duplex DNA with a 4 base pair overhang as substrate. Also has 3'-tyrosyl DNA phosphodiesterase activity, but less efficiently and much slower than TDP1. Constitutes the major if not only 5'-tyrosyl-DNA phosphodiesterase in cells. Also acts as an adapter by participating in the specific activation of MAP3K7/TAK1 in response to TGF-beta: associates with components of the TGF-beta receptor-TRAF6-TAK1 signaling module and promotes their ubiquitination dependent complex formation. Involved in non-canonical TGF-beta induced signaling routes. May also act as a negative regulator of ETS1 and may inhibit NF-kappa-B activation. Acts as a regulator of ribosome biogenesis following stress. The sequence is that of Tyrosyl-DNA phosphodiesterase 2 (Tdp2) from Mus musculus (Mouse).